The sequence spans 217 residues: Probable GTP-binding protein EngB (217 aa).

One can recognise an EngB-type G domain in the interval 29–213 (GPSEVAFAGR…RQAIAQTVGI (185 aa)). GTP-binding positions include 37–44 (GRSNVGKS), 64–68 (GRTQE), 91–94 (DMPG), 158–161 (TKTD), and 192–194 (TSS). Residues Ser-44 and Thr-66 each coordinate Mg(2+).

Belongs to the TRAFAC class TrmE-Era-EngA-EngB-Septin-like GTPase superfamily. EngB GTPase family. Requires Mg(2+) as cofactor.

Functionally, necessary for normal cell division and for the maintenance of normal septation. This chain is Probable GTP-binding protein EngB, found in Rhizobium etli (strain CIAT 652).